Reading from the N-terminus, the 103-residue chain is Large ribosomal subunit protein bL21 (103 aa).

The protein belongs to the bacterial ribosomal protein bL21 family. As to quaternary structure, part of the 50S ribosomal subunit. Contacts protein L20.

Its function is as follows. This protein binds to 23S rRNA in the presence of protein L20. This is Large ribosomal subunit protein bL21 from Polaromonas naphthalenivorans (strain CJ2).